The primary structure comprises 311 residues: Cell division protein ZipA (311 aa).

The Periplasmic segment spans residues 1–6 (MENLQL). A helical membrane pass occupies residues 7–27 (VLFVLGAIAIIAVLVHGFWSI). The Cytoplasmic portion of the chain corresponds to 28-311 (RKQQPKSLKE…YLQRIRAQLD (284 aa)). Residues 46-114 (DQASVRDSQG…FALSDEPVQR (69 aa)) form a disordered region. Composition is skewed to basic and acidic residues over residues 62–83 (GEVR…DKPV) and 94–103 (RDVEDSRHEQ).

The protein belongs to the ZipA family. As to quaternary structure, interacts with FtsZ via their C-terminal domains.

It is found in the cell inner membrane. Functionally, essential cell division protein that stabilizes the FtsZ protofilaments by cross-linking them and that serves as a cytoplasmic membrane anchor for the Z ring. Also required for the recruitment to the septal ring of downstream cell division proteins. The sequence is that of Cell division protein ZipA from Shewanella woodyi (strain ATCC 51908 / MS32).